A 593-amino-acid polypeptide reads, in one-letter code: Tectonic-1 (593 aa).

Residues 1–22 (MGSRGLPPLLLVLLNCYTSSST) form the signal peptide. Positions 37-72 (KEDLNSTKATPTTLQPSLSPRTPGTPRAPERSGPRP) are disordered. Asparagine 41 carries N-linked (GlcNAc...) asparagine glycosylation. The segment covering 42–58 (STKATPTTLQPSLSPRT) has biased composition (polar residues). An N-linked (GlcNAc...) asparagine glycan is attached at asparagine 303. Arginine 486 carries the post-translational modification Omega-N-methylarginine. Asparagine 536 carries N-linked (GlcNAc...) asparagine glycosylation.

Belongs to the tectonic family. In terms of assembly, part of the tectonic-like complex (also named B9 complex).

Its subcellular location is the cytoplasm. The protein localises to the cytoskeleton. It localises to the cilium basal body. It is found in the secreted. Its function is as follows. Component of the tectonic-like complex, a complex localized at the transition zone of primary cilia and acting as a barrier that prevents diffusion of transmembrane proteins between the cilia and plasma membranes. Regulator of Hedgehog (Hh), required for both activation and inhibition of the Hh pathway in the patterning of the neural tube. During neural tube development, it is required for formation of the most ventral cell types and for full Hh pathway activation. Functions in Hh signal transduction to fully activate the pathway in the presence of high Hh levels and to repress the pathway in the absence of Hh signals. Modulates Hh signal transduction downstream of SMO and RAB23. In Mus musculus (Mouse), this protein is Tectonic-1 (Tctn1).